The sequence spans 101 residues: Small ribosomal subunit protein uS14A (101 aa).

It belongs to the universal ribosomal protein uS14 family. Part of the 30S ribosomal subunit. Contacts proteins S3 and S10.

Its function is as follows. Binds 16S rRNA, required for the assembly of 30S particles and may also be responsible for determining the conformation of the 16S rRNA at the A site. This Salinispora arenicola (strain CNS-205) protein is Small ribosomal subunit protein uS14A.